We begin with the raw amino-acid sequence, 198 residues long: Peptide deformylase (198 aa).

2 residues coordinate Fe cation: Cys123 and His167. Glu168 is an active-site residue. His171 contacts Fe cation.

The protein belongs to the polypeptide deformylase family. Fe(2+) serves as cofactor.

It catalyses the reaction N-terminal N-formyl-L-methionyl-[peptide] + H2O = N-terminal L-methionyl-[peptide] + formate. In terms of biological role, removes the formyl group from the N-terminal Met of newly synthesized proteins. Requires at least a dipeptide for an efficient rate of reaction. N-terminal L-methionine is a prerequisite for activity but the enzyme has broad specificity at other positions. The sequence is that of Peptide deformylase from Ureaplasma parvum serovar 3 (strain ATCC 27815 / 27 / NCTC 11736).